The chain runs to 826 residues: Zinc phosphodiesterase ELAC protein 2 (826 aa).

A mitochondrion-targeting transit peptide spans 1–16 (MWALCSLLRSAAGRTM). 2 disordered regions span residues 16 to 51 (MSQG…PSGC) and 188 to 231 (EQRR…VSQR). Basic and acidic residues predominate over residues 27 to 38 (ARRERPRKDPLR). 6 positions are modified to phosphoserine: Ser-199, Ser-208, Ser-212, Ser-229, Ser-618, and Ser-736. Residues 208–224 (SPERSSDSESNENEPHL) show a composition bias toward basic and acidic residues. The tract at residues 798–826 (ELAGGLEDGEPQQKRAHTEEPQAKKVRAQ) is disordered. Positions 808–820 (PQQKRAHTEEPQA) are enriched in basic and acidic residues.

The protein belongs to the RNase Z family. Homodimer. Interacts with PTCD1. Zn(2+) is required as a cofactor. In terms of tissue distribution, widely expressed. Highly expressed in heart, placenta, liver, skeletal muscle, kidney, pancreas, testis and ovary. Weakly expressed in brain, lung, spleen, thymus, prostate, small intestine, colon and leukocytes.

The protein resides in the mitochondrion. It is found in the mitochondrion matrix. It localises to the mitochondrion nucleoid. The protein localises to the nucleus. It catalyses the reaction Endonucleolytic cleavage of RNA, removing extra 3' nucleotides from tRNA precursor, generating 3' termini of tRNAs. A 3'-hydroxy group is left at the tRNA terminus and a 5'-phosphoryl group is left at the trailer molecule.. Zinc phosphodiesterase, which displays mitochondrial tRNA 3'-processing endonuclease activity. Involved in tRNA maturation, by removing a 3'-trailer from precursor tRNA. Associates with mitochondrial DNA complexes at the nucleoids to initiate RNA processing and ribosome assembly. In Homo sapiens (Human), this protein is Zinc phosphodiesterase ELAC protein 2 (ELAC2).